Consider the following 248-residue polypeptide: Transcription factor MYBC1 (248 aa).

Positions 102-161 (TLKRPRLVWTPQLHKRFVDAVGHLGIKNAVPKTIMQLMSVEGLTRENVASHLQKYRLYLR) form a DNA-binding region, myb-like GARP.

Expressed in roots, leaves, stems, petioles, filaments, stigma, pedicels, sepals, anthers, petals, and siliques.

Its subcellular location is the nucleus. Its function is as follows. Probable transcription factor that acts as a negative regulator of freezing tolerance via a CBF-independent pathway. This chain is Transcription factor MYBC1, found in Arabidopsis thaliana (Mouse-ear cress).